A 172-amino-acid polypeptide reads, in one-letter code: Myosin regulatory light polypeptide 9 (172 aa).

The span at 1–16 (MSSKRAKTKTTKKRPQ) shows a compositional bias: basic residues. The interval 1–20 (MSSKRAKTKTTKKRPQRATS) is disordered. Ser2 carries the post-translational modification N-acetylserine. Phosphothreonine; by MLCK, CIT and ROCK2 is present on Thr19. At Ser20 the chain carries Phosphoserine; by CDC42BP, CIT, MLCK, PAK1, ROCK1, ROCK2, DAPK1, DAPK2 and ZIPK/DAPK3. EF-hand domains are found at residues 29-64 (SQIQ…LGKN), 98-133 (DPED…MGDR), and 134-169 (FTDE…GAKD). Ca(2+)-binding residues include Asp42, Asn44, Asp46, and Asp53.

Myosin is a hexamer of 2 heavy chains and 4 light chains: interacts with myosin heavy chain MYO19. Interacts with LUZP1; the interaction results in inhibition of phosphorylation of MYL9 by DAPK3. In terms of processing, phosphorylation increases the actin-activated myosin ATPase activity and thereby regulates the contractile activity. It is required to generate the driving force in the migration of the cells but not necessary for localization of myosin-2 at the leading edge. Phosphorylation is required for myotube formation. Phosphorylated by DAPK3; DAPK3-mediated phosphorylation is inhibited by LUZP1.

The protein localises to the cytoplasm. Its subcellular location is the cytoskeleton. It is found in the cell cortex. Functionally, myosin regulatory subunit that plays an important role in regulation of both smooth muscle and nonmuscle cell contractile activity via its phosphorylation. Implicated in cytokinesis, receptor capping, and cell locomotion. In myoblasts, may regulate PIEZO1-dependent cortical actomyosin assembly involved in myotube formation. This chain is Myosin regulatory light polypeptide 9 (MYL9), found in Bos taurus (Bovine).